Reading from the N-terminus, the 333-residue chain is NADH dehydrogenase (ubiquinone) complex I, assembly factor 6 (333 aa).

A mitochondrion-targeting transit peptide spans methionine 1–arginine 44.

This sequence belongs to the NDUFAF6 family.

It is found in the mitochondrion inner membrane. Involved in the assembly of mitochondrial NADH:ubiquinone oxidoreductase complex (complex I) at early stages. May play a role in the biogenesis of complex I subunit MT-ND1. This Bos taurus (Bovine) protein is NADH dehydrogenase (ubiquinone) complex I, assembly factor 6 (NDUFAF6).